Reading from the N-terminus, the 374-residue chain is Alanine racemase (374 aa).

The Proton acceptor; specific for D-alanine role is filled by Lys-35. N6-(pyridoxal phosphate)lysine is present on Lys-35. Residue Arg-130 coordinates substrate. Catalysis depends on Tyr-253, which acts as the Proton acceptor; specific for L-alanine. Met-305 is a binding site for substrate.

The protein belongs to the alanine racemase family. Requires pyridoxal 5'-phosphate as cofactor.

The catalysed reaction is L-alanine = D-alanine. It participates in amino-acid biosynthesis; D-alanine biosynthesis; D-alanine from L-alanine: step 1/1. Catalyzes the interconversion of L-alanine and D-alanine. May also act on other amino acids. The protein is Alanine racemase (alr) of Ralstonia pickettii (strain 12J).